The sequence spans 391 residues: Phosphoglycerate kinase (391 aa).

Residues 21–23, R36, 59–62, R113, and R146 each bind substrate; these read DLN and HLGR. Residues K197, E319, and 345-348 each bind ATP; that span reads GGDT.

Belongs to the phosphoglycerate kinase family. As to quaternary structure, monomer.

The protein resides in the cytoplasm. The enzyme catalyses (2R)-3-phosphoglycerate + ATP = (2R)-3-phospho-glyceroyl phosphate + ADP. The protein operates within carbohydrate degradation; glycolysis; pyruvate from D-glyceraldehyde 3-phosphate: step 2/5. The protein is Phosphoglycerate kinase of Shewanella piezotolerans (strain WP3 / JCM 13877).